The chain runs to 294 residues: Homeobox protein HD1 (294 aa).

Residues 197-217 (ELKLELKQGFKSRIEDVREEI) enclose the ELK domain. Positions 218–281 (MRKRRAGKLP…NQRKRNWHNN (64 aa)) form a DNA-binding region, homeobox; TALE-type.

The protein belongs to the TALE/KNOX homeobox family. In terms of tissue distribution, in roots, stems and cotyledons of one-week old seedlings. In mature plants, in young leaves from first level below flowers as well as in flower buds and open flowers.

The protein localises to the nucleus. Its function is as follows. Possible developmental regulator. This Brassica napus (Rape) protein is Homeobox protein HD1 (HD1).